The primary structure comprises 938 residues: Myocardin (938 aa).

Positions 12–27 match the MEF2C-binding motif; sequence IRSKFRSVLQLRLQQR. An RPEL 1 repeat occupies 18–43; sequence SVLQLRLQQRRTQEQLANQGIIPPLK. Over residues 48 to 61 the composition is skewed to basic and acidic residues; it reads FHEQRKHLDSDKAK. The segment at 48 to 68 is disordered; sequence FHEQRKHLDSDKAKNSLKRKA. RPEL repeat units lie at residues 62–87 and 106–131; these read NSLK…QAST and DDLN…PVDS. The interval 153-205 is HDAC5-binding; sequence FEEDSSSDGLSPDQTRSEDPQNSAGSPPDAKASDTPSTGSLGTNQDLASGSEN. The segment at 154–281 is disordered; it reads EEDSSSDGLS…DQKAEKSPPP (128 aa). Polar residues-rich tracts occupy residues 159-177, 186-203, and 210-220; these read SDGL…NSAG, DTPS…ASGS, and SASQPSHQSDA. Basic residues predominate over residues 248 to 265; sequence NRHKKPKDPKPKVKKLKY. The region spanning 371-405 is the SAP domain; the sequence is LDDLKVSELRQQLRIRGLPVSGTKTALMDRLRPFQ. Phosphoserine; by GSK3-beta is present on residues Ser451, Ser455, Ser459, and Ser463. Residues 516–561 adopt a coiled-coil conformation; it reads EKDKMLVEKQKVINELTWKLQQEQRQVEELRMQLQKQKRNNCSEKK. Phosphoserine; by GSK3-beta occurs at positions 626, 630, 634, and 638. Disordered regions lie at residues 635–678 and 693–734; these read PQHS…SSPI and SDKV…MTRS. Low complexity predominate over residues 699 to 715; it reads KFSIPSPTFSKSSSAIS. The segment at 717–938 is required for interaction with and ubiquitination by STUB1; that stretch reads VTQPPSYEDA…SSMDLHLQQW (222 aa). Phosphoserine; by MAPK1 and MAPK3 occurs at positions 815, 862, and 869. Thr896 is modified (phosphothreonine; by MAPK1 and MAPK3).

Homodimer. Interacts with SRF, its association does not depend on specific DNA sequences for ternary complex formation. Interacts with MLLT7/FOXO4. Interacts (via C-terminal) with EP300 (via the CREB-binding domain). Interacts with HDAC4 and HDAC5. Interacts with MEF2C. Interacts (via C-terminus) with STUB1/CHIP. Interacts with PURB. Ubiquitinated; by STUB1/CHIP at the C-terminus, leading to its degradation by the proteasome. Phosphorylation by GSK3B is required for STUB1/CHIP-mediated ubiquitination. Post-translationally, phosphorylation negatively regulates the intrinsic myocardin transcriptional activity. Phosphorylated; by GSK3B. As to expression, expressed in the heart, aorta and bladder. Expressed in smooth muscle cell-containing tissues: stomach, small intestine, colon, lung, placenta and uterus. Very faint expression in prostate and skeletal muscle.

Its subcellular location is the nucleus. Functionally, smooth muscle cells (SM) and cardiac muscle cells-specific transcriptional factor which uses the canonical single or multiple CArG boxes DNA sequence. Acts as a cofactor of serum response factor (SRF) with the potential to modulate SRF-target genes. Plays a crucial role in cardiogenesis, urinary bladder development, and differentiation of the smooth muscle cell lineage (myogenesis). Positively regulates the transcription of genes involved in vascular smooth muscle contraction. This chain is Myocardin (MYOCD), found in Homo sapiens (Human).